A 230-amino-acid chain; its full sequence is CASP-like protein 2A2 (230 aa).

The interval 1-23 is disordered; it reads MEKKDEGNPPMAVMGSRDENEDV. The Cytoplasmic segment spans residues 1 to 29; that stretch reads MEKKDEGNPPMAVMGSRDENEDVKSTMRT. The helical transmembrane segment at 30–50 threads the bilayer; the sequence is AETMLRLVPVALCVSALVVML. At 51–71 the chain is on the extracellular side; that stretch reads KNTQTNDYGSLSYSDLGAFRY. The helical transmembrane segment at 72–92 threads the bilayer; that stretch reads LVNANGICAGYSLLSAVIVAM. Over 93–100 the chain is Cytoplasmic; the sequence is PRAWTMPQ. A helical membrane pass occupies residues 101–121; it reads AWTFFLLDQVLTYVILAAGTV. Over 122 to 151 the chain is Extracellular; sequence STEVLYLANKGDTSIAWSAACASFGGFCHK. A helical transmembrane segment spans residues 152–172; sequence ALISTVITFVAVIFYAALSLV. At 173-230 the chain is on the cytoplasmic side; that stretch reads SSYKLFSKYDAPVVTQSGEGIKTVTLGSPPPPPPPPPSNLHLHLHAKLACPAHNNSPN.

This sequence belongs to the Casparian strip membrane proteins (CASP) family. In terms of assembly, homodimer and heterodimers.

The protein resides in the cell membrane. The chain is CASP-like protein 2A2 from Populus trichocarpa (Western balsam poplar).